The following is a 465-amino-acid chain: MIPVRGLEGRKVAVLGLGRSGLATARALEAGGAEPLLWDDSPEARAKAEGQGFTVTDLTRDRAFEGVALLVTSPGIPHLYPAPNPVIARAMAAGVPVDNDIGLFFRSFATRDWDAFDQMPRVVCVTGSNGKSTTTALIHHILSEAGRPTQMAGNIGRGVLDLDPARDGEVVVLELSSYQTDLARALTPDVAVFTNLSPDHLDRHGGMGGYFAAKRRLFAEGGPDRAVIGVDEPEGLYLAGQLSVAPEDDRVIRISSGQKLERFGWSVFARKGFLAEWRKGRQMASIDLRAMPGLPGAHNHQNACAAYAACRTLGLAPRQIEAALASFAGLPHRSQTVGEKGGVRFVNDSKATNVDSAAKALQAFPKIRWIAGGLGKDGGIVALQPHLGSVVKAYLIGHSARDFALQIGATDHEICETMERAVARAAEEAQPGEVVLLAPAAASFDQYPNFEKRGEDFMEKVKALL.

Position 127–133 (glycine 127–threonine 133) interacts with ATP.

Belongs to the MurCDEF family.

Its subcellular location is the cytoplasm. The enzyme catalyses UDP-N-acetyl-alpha-D-muramoyl-L-alanine + D-glutamate + ATP = UDP-N-acetyl-alpha-D-muramoyl-L-alanyl-D-glutamate + ADP + phosphate + H(+). It functions in the pathway cell wall biogenesis; peptidoglycan biosynthesis. Functionally, cell wall formation. Catalyzes the addition of glutamate to the nucleotide precursor UDP-N-acetylmuramoyl-L-alanine (UMA). This chain is UDP-N-acetylmuramoylalanine--D-glutamate ligase, found in Cereibacter sphaeroides (strain KD131 / KCTC 12085) (Rhodobacter sphaeroides).